Consider the following 335-residue polypeptide: 2-acylglycerol O-acyltransferase 1 (335 aa).

The next 2 helical transmembrane spans lie at Trp24 to Leu44 and Val47 to Ala67. Asn125 and Asn180 each carry an N-linked (GlcNAc...) asparagine glycan.

This sequence belongs to the diacylglycerol acyltransferase family.

The protein localises to the endoplasmic reticulum membrane. It catalyses the reaction a 2-acylglycerol + an acyl-CoA = a 1,2-diacylglycerol + CoA. It carries out the reaction a 2-acylglycerol + an acyl-CoA = a 1,2-diacyl-sn-glycerol + CoA. The catalysed reaction is a 2-acylglycerol + an acyl-CoA = a 2,3-diacyl-sn-glycerol + CoA. The enzyme catalyses a 1-acylglycerol + an acyl-CoA = a 1,2-diacylglycerol + CoA. It catalyses the reaction a 1-acylglycerol + an acyl-CoA = a 1,3-diacylglycerol + CoA. It carries out the reaction a 1-acyl-sn-glycerol + an acyl-CoA = a 1,3-diacyl-sn-glycerol + CoA. The catalysed reaction is a 3-acyl-sn-glycerol + an acyl-CoA = a 1,3-diacyl-sn-glycerol + CoA. It functions in the pathway glycerolipid metabolism; triacylglycerol biosynthesis. Its function is as follows. Involved in glycerolipid synthesis and lipid metabolism. Catalyzes the formation of diacylglycerol, the precursor of triacylglycerol, by transferring the acyl chain of a fatty acyl-CoA to a monoacylglycerol, mainly at the sn-1 or sn-3 positions. It uses both sn-2-monoacylglycerol (2-acylglycerol) and sn-1-monoacylglycerol (1-acyl-sn-glycerol) equally well as substrates, and uses sn-3-monoacylglycerol (3-acyl-sn-glycerol) with lower efficiency. This chain is 2-acylglycerol O-acyltransferase 1 (mogat1), found in Xenopus laevis (African clawed frog).